The following is a 35-amino-acid chain: Photosystem II reaction center protein T (35 aa).

Residues 3–23 (ALVYTFLLVSTLGIIFFAIFF) form a helical membrane-spanning segment.

This sequence belongs to the PsbT family. In terms of assembly, PSII is composed of 1 copy each of membrane proteins PsbA, PsbB, PsbC, PsbD, PsbE, PsbF, PsbH, PsbI, PsbJ, PsbK, PsbL, PsbM, PsbT, PsbY, PsbZ, Psb30/Ycf12, at least 3 peripheral proteins of the oxygen-evolving complex and a large number of cofactors. It forms dimeric complexes.

Its subcellular location is the plastid. The protein localises to the chloroplast thylakoid membrane. Its function is as follows. Found at the monomer-monomer interface of the photosystem II (PS II) dimer, plays a role in assembly and dimerization of PSII. PSII is a light-driven water plastoquinone oxidoreductase, using light energy to abstract electrons from H(2)O, generating a proton gradient subsequently used for ATP formation. This Metasequoia glyptostroboides (Dawn redwood) protein is Photosystem II reaction center protein T.